Here is a 512-residue protein sequence, read N- to C-terminus: Opioid growth factor receptor-like protein 1 (512 aa).

Disordered stretches follow at residues 1–72 (MGNI…ETGT), 323–469 (IWGP…TCCK), and 488–512 (SLSP…GPFT). Composition is skewed to acidic residues over residues 28 to 54 (GGEE…DNEE) and 62 to 71 (TNEGGEEETG). A compositionally biased stretch (basic and acidic residues) spans 328 to 337 (DKQKADENKA). The segment covering 347-361 (QKKHSHVEKKSRPAK) has biased composition (basic residues). Polar residues predominate over residues 408-421 (TVTSENNSSKTGQT). The segment covering 449–468 (RSLDTEHDLKRPEADRETCC) has biased composition (basic and acidic residues). Positions 490–499 (SPGTSNSNVT) are enriched in polar residues.

The protein belongs to the opioid growth factor receptor family.

The protein is Opioid growth factor receptor-like protein 1 (ogfrl1) of Xenopus tropicalis (Western clawed frog).